The sequence spans 190 residues: Cytoplasmic envelopment protein 3 (190 aa).

A lipid anchor (N-myristoyl glycine; by host) is attached at G2. The segment at 27–190 is disordered; the sequence is RQVSLRSYDN…TKKPAASLPF (164 aa). A compositionally biased stretch (polar residues) spans 30-43; it reads SLRSYDNIPPTSSS. Acidic residues predominate over residues 44–58; it reads DEGEDDDDGEDDDNE. A compositionally biased stretch (basic and acidic residues) spans 80–90; the sequence is SHREATHDGSK. The segment covering 108 to 123 has biased composition (basic residues); it reads KQSKKKKKPSKHHHHQ. Residues 130 to 139 show a composition bias toward acidic residues; the sequence is ETDDLDEEDT.

It belongs to the herpesviridae cytoplasmic envelopment protein 3 family. Interacts with cytoplasmic envelopment protein 2; this interaction is essential for the proper localization of each protein to the assembly complex and thus for the production of infectious virus. In terms of processing, myristoylation and palmitoylation (probably on one or more of the nearby cysteines at the N-terminus) enable membrane-binding and Golgi apparatus-specific targeting and are essential for efficient packaging. Post-translationally, phosphorylated. Phosphorylation does not seem to be required for recycling to the host Golgi apparatus. Packaging is selective for underphosphorylated forms.

It localises to the virion tegument. Its subcellular location is the virion membrane. The protein resides in the host cell membrane. It is found in the host Golgi apparatus membrane. Its function is as follows. Plays an important role in the cytoplasmic envelopment of tegument proteins and capsids during the assembly and egress processes. Also participates in viral entry at the fusion step probably by regulating the core fusion machinery. This is Cytoplasmic envelopment protein 3 (UL99) from Human cytomegalovirus (strain AD169) (HHV-5).